The following is a 196-amino-acid chain: Gastrula zinc finger protein XlCGF8.2DB (196 aa).

7 C2H2-type zinc fingers span residues 6–28 (FTCKECGKGFTQKRNLASHMTIH), 34–56 (FSCTECGKGFTQKRNLASHLTIH), 62–84 (FPCTECGKGFTQKSNLVSHMKIH), 90–112 (FTCTECGKEFAHKHRLLGHLKIH), 118–140 (FSCTECGKHFAHKYHLVSHMKIH), 146–168 (FTCTECGEHFANKVSLLGHLKMH), and 174–196 (FTCTECGNSFTQVSSLVSHMKIH).

Belongs to the krueppel C2H2-type zinc-finger protein family.

Its subcellular location is the nucleus. Functionally, may be involved in transcriptional regulation. This chain is Gastrula zinc finger protein XlCGF8.2DB, found in Xenopus laevis (African clawed frog).